Here is an 899-residue protein sequence, read N- to C-terminus: Protein argonaute (899 aa).

The segment at 107-129 is disordered; the sequence is TQKPKRRGGRAGGMRGNRGGPST. Residues 116–125 are compositionally biased toward gly residues; it reads RAGGMRGNRG. Residues 229-313 enclose the PAZ domain; the sequence is SMCELLNENR…KQDDYCNSVL (85 aa). A Piwi domain is found at 555–878; it reads LVVVVIPGPK…LSKFCGEILG (324 aa).

It belongs to the argonaute family. Ago subfamily. As to quaternary structure, interacts with miR2. Highly specific binding to the mRNA m7G-cap. May be a component of the RNA-induced silencing complex (RISC), a sequence-specific, multicomponent nuclease that destroys or silences messenger RNAs homologous to the silencing trigger.

It is found in the cytoplasm. In terms of biological role, plays an essential role in growth and, with Dicer, also involved in microRNA (miRNA)-mediated translational repression. The RNA interference pathway is implicated in antigenic variation having a role in regulation of variant-specific surface protein (VSP)-coding gene expression. Several VSP genes are transcribed but only transcripts encoding the VSP to be expressed accumulate. Antisense RNAs corresponding to the silenced VSP genes are detected. In Giardia intestinalis (strain ATCC 50581 / GS clone H7) (Giardia lamblia), this protein is Protein argonaute.